We begin with the raw amino-acid sequence, 267 residues long: Corrinoid adenosyltransferase EutT (267 aa).

2 residues coordinate a divalent metal cation: Cys-80 and Cys-83.

This sequence belongs to the Cob(I)alamin adenosyltransferase family. EutT subfamily. In terms of assembly, homodimer. The cofactor is a divalent metal cation.

It localises to the bacterial microcompartment. The catalysed reaction is 2 cob(II)alamin + reduced [electron-transfer flavoprotein] + 2 ATP + 2 H2O = 2 adenosylcob(III)alamin + oxidized [electron-transfer flavoprotein] + 2 phosphate + 2 diphosphate + 3 H(+). It carries out the reaction 2 cob(II)inamide + reduced [electron-transfer flavoprotein] + 2 ATP + 2 H2O = 2 adenosylcob(III)inamide + oxidized [electron-transfer flavoprotein] + 2 phosphate + 2 diphosphate + 3 H(+). It functions in the pathway amine and polyamine degradation; ethanolamine degradation. Its function is as follows. Converts cyanocobalamin (CN-B12) to adenosylcobalamin (AdoCbl), the inducer of the eut operon. Is not active on cobinamide nor other intermediates in the adenosylcobalamin synthetic pathway. Allows full induction of the eut operon. Can use ADP, CTP and dATP in place of ATP, and cobinamide in place of cobalamin, none are as efficiently used as ATP and cobalamin. In terms of biological role, expression of the eut operon allows this bacteria to use ethanolamine (EA) as a carbon, nitrogen and energy source. It relies on cobalamin (vitamin B12) both as a cofactor for the ethanolamine ammonia-lyase (EAL) activity and to induce the operon. EA enhances bacterial survival in macrophages in a concentration-dependent manner, suggesting it is an important nutrient during infection. This chain is Corrinoid adenosyltransferase EutT, found in Salmonella typhimurium (strain LT2 / SGSC1412 / ATCC 700720).